A 166-amino-acid chain; its full sequence is MRALYPGSFDPVTFGHLDLIQRASQLFDEVIVAVLRNPNKQPSFSLEERLEQLSSVTSHLPQVRVTSFEGLTVHFALEQDARVILRGLRALSDFEFELQLAHTNASLSGQVDTLFMATAVPHSFLSSSVVKEVARFGGDVQHLVPETVAIDLRRLFNQRVDVGGDR.

Serine 8 contributes to the substrate binding site. Residues 8-9 (SF) and histidine 16 contribute to the ATP site. Positions 40, 72, and 86 each coordinate substrate. ATP is bound by residues 87-89 (GLR), glutamate 97, and 122-128 (HSFLSSS).

Belongs to the bacterial CoaD family. As to quaternary structure, homohexamer. It depends on Mg(2+) as a cofactor.

It is found in the cytoplasm. It carries out the reaction (R)-4'-phosphopantetheine + ATP + H(+) = 3'-dephospho-CoA + diphosphate. The protein operates within cofactor biosynthesis; coenzyme A biosynthesis; CoA from (R)-pantothenate: step 4/5. Reversibly transfers an adenylyl group from ATP to 4'-phosphopantetheine, yielding dephospho-CoA (dPCoA) and pyrophosphate. In Synechococcus sp. (strain RCC307), this protein is Phosphopantetheine adenylyltransferase.